Consider the following 261-residue polypeptide: Cytochrome c oxidase subunit 3 (261 aa).

The Mitochondrial matrix portion of the chain corresponds to 1–15; sequence MTHQTHAYHMVNPSP. The chain crosses the membrane as a helical span at residues 16-34; the sequence is WPLTGALSALLMTSGLIMW. Residues 35 to 40 lie on the Mitochondrial intermembrane side of the membrane; sequence FHFNST. The helical transmembrane segment at 41 to 66 threads the bilayer; the sequence is ILLMLGLTTNMLTMYQWWRDIIREST. The Mitochondrial matrix portion of the chain corresponds to 67–72; it reads FQGHHT. The chain crosses the membrane as a helical span at residues 73–105; that stretch reads PTVQKGLRYGMILFIISEVLFFTGFFWAFYHSS. Residues 106–128 lie on the Mitochondrial intermembrane side of the membrane; it reads LAPTPELGGCWPPTGIHPLNPLE. A helical membrane pass occupies residues 129–152; it reads VPLLNTSVLLASGVSITWAHHSLM. The Mitochondrial matrix segment spans residues 153 to 155; the sequence is EGN. The helical transmembrane segment at 156 to 183 threads the bilayer; it reads RNHMLQALFITIALGVYFTLLQASEYYE. Topologically, residues 184–190 are mitochondrial intermembrane; it reads APFTISD. Residues 191-223 form a helical membrane-spanning segment; sequence GVYGSTFFVATGFHGLHVIIGSTFLIVCFFRQL. The Mitochondrial matrix portion of the chain corresponds to 224–232; that stretch reads KFHFTSSHH. A helical membrane pass occupies residues 233-256; the sequence is FGFEAAAWYWHFVDVVWLFLYVSI. The Mitochondrial intermembrane segment spans residues 257-261; sequence YWWGS.

It belongs to the cytochrome c oxidase subunit 3 family. Component of the cytochrome c oxidase (complex IV, CIV), a multisubunit enzyme composed of 14 subunits. The complex is composed of a catalytic core of 3 subunits MT-CO1, MT-CO2 and MT-CO3, encoded in the mitochondrial DNA, and 11 supernumerary subunits COX4I, COX5A, COX5B, COX6A, COX6B, COX6C, COX7A, COX7B, COX7C, COX8 and NDUFA4, which are encoded in the nuclear genome. The complex exists as a monomer or a dimer and forms supercomplexes (SCs) in the inner mitochondrial membrane with NADH-ubiquinone oxidoreductase (complex I, CI) and ubiquinol-cytochrome c oxidoreductase (cytochrome b-c1 complex, complex III, CIII), resulting in different assemblies (supercomplex SCI(1)III(2)IV(1) and megacomplex MCI(2)III(2)IV(2)).

It is found in the mitochondrion inner membrane. The enzyme catalyses 4 Fe(II)-[cytochrome c] + O2 + 8 H(+)(in) = 4 Fe(III)-[cytochrome c] + 2 H2O + 4 H(+)(out). Component of the cytochrome c oxidase, the last enzyme in the mitochondrial electron transport chain which drives oxidative phosphorylation. The respiratory chain contains 3 multisubunit complexes succinate dehydrogenase (complex II, CII), ubiquinol-cytochrome c oxidoreductase (cytochrome b-c1 complex, complex III, CIII) and cytochrome c oxidase (complex IV, CIV), that cooperate to transfer electrons derived from NADH and succinate to molecular oxygen, creating an electrochemical gradient over the inner membrane that drives transmembrane transport and the ATP synthase. Cytochrome c oxidase is the component of the respiratory chain that catalyzes the reduction of oxygen to water. Electrons originating from reduced cytochrome c in the intermembrane space (IMS) are transferred via the dinuclear copper A center (CU(A)) of subunit 2 and heme A of subunit 1 to the active site in subunit 1, a binuclear center (BNC) formed by heme A3 and copper B (CU(B)). The BNC reduces molecular oxygen to 2 water molecules using 4 electrons from cytochrome c in the IMS and 4 protons from the mitochondrial matrix. The protein is Cytochrome c oxidase subunit 3 (MT-CO3) of Aepyceros melampus (Impala).